Consider the following 431-residue polypeptide: Aspartate--tRNA(Asp/Asn) ligase (431 aa).

E170 serves as a coordination point for L-aspartate. Residues 192–195 (QLYK) form an aspartate region. R214 lines the L-aspartate pocket. ATP-binding positions include 214-216 (RAE), 222-224 (RHL), and E354. Residues E354 and S357 each contribute to the Mg(2+) site. L-aspartate contacts are provided by S357 and R361. An ATP-binding site is contributed by 402 to 405 (GLER).

Belongs to the class-II aminoacyl-tRNA synthetase family. Type 2 subfamily. Homodimer. It depends on Mg(2+) as a cofactor.

It localises to the cytoplasm. The enzyme catalyses tRNA(Asx) + L-aspartate + ATP = L-aspartyl-tRNA(Asx) + AMP + diphosphate. Aspartyl-tRNA synthetase with relaxed tRNA specificity since it is able to aspartylate not only its cognate tRNA(Asp) but also tRNA(Asn). Reaction proceeds in two steps: L-aspartate is first activated by ATP to form Asp-AMP and then transferred to the acceptor end of tRNA(Asp/Asn). The polypeptide is Aspartate--tRNA(Asp/Asn) ligase (Methanopyrus kandleri (strain AV19 / DSM 6324 / JCM 9639 / NBRC 100938)).